A 308-amino-acid polypeptide reads, in one-letter code: Protein translocase subunit SecF (308 aa).

The next 6 membrane-spanning stretches (helical) occupy residues 28 to 48, 140 to 160, 164 to 184, 194 to 214, 246 to 266, and 272 to 292; these read SIIL…NFGI, IEAG…YIWV, WYFG…ALGF, LSTI…SVVI, ILTV…GGEA, and VLVF…SAPI.

It belongs to the SecD/SecF family. SecF subfamily. In terms of assembly, forms a complex with SecD. Part of the essential Sec protein translocation apparatus which comprises SecA, SecYEG and auxiliary proteins SecDF-YajC and YidC.

The protein resides in the cell inner membrane. In terms of biological role, part of the Sec protein translocase complex. Interacts with the SecYEG preprotein conducting channel. SecDF uses the proton motive force (PMF) to complete protein translocation after the ATP-dependent function of SecA. The protein is Protein translocase subunit SecF of Rickettsia conorii (strain ATCC VR-613 / Malish 7).